Consider the following 126-residue polypeptide: Large ribosomal subunit protein eL18 (126 aa).

It belongs to the eukaryotic ribosomal protein eL18 family.

This chain is Large ribosomal subunit protein eL18, found in Methanosarcina acetivorans (strain ATCC 35395 / DSM 2834 / JCM 12185 / C2A).